The primary structure comprises 1501 residues: RE1-silencing transcription factor A (1501 aa).

The C2H2-type 1 zinc finger occupies 158–180; it reads FRCKPCQYKAESEEEFVHHIKIH. Residues 186 to 200 are compositionally biased toward basic and acidic residues; sequence VDNDSKKNPQGKEAD. The segment at 186–209 is disordered; the sequence is VDNDSKKNPQGKEADSSIPEESDI. 7 C2H2-type zinc fingers span residues 214-236, 246-268, 274-296, 302-324, 330-353, 359-381, and 387-410; these read IQCD…LKHH, YKCT…LRNH, YTCS…IRTH, YQCI…MRTH, FKCE…RQVH, LTCP…VELH, and FLCP…KSRH. Disordered stretches follow at residues 491-514, 569-612, 885-929, and 1040-1079; these read SSTQ…SRKS, SFVK…SVAS, PTKV…VPGD, and VAAG…GDEQ. Basic and acidic residues-rich tracts occupy residues 498–512 and 594–605; these read KASE…DKSR and ITEKKEKGKQLD. The segment covering 1067 to 1079 has biased composition (polar residues); sequence QPTSVQPPGGDEQ. The C2H2-type 9 zinc-finger motif lies at 1463–1485; that stretch reads FVCIFCDRTFRKEEEYTKHLRRH.

It localises to the nucleus. The protein localises to the cytoplasm. Functionally, transcriptional repressor which binds neuron-restrictive silencer element (NRSE) and represses neuronal gene transcription in non-neuronal cells. Plays a role in the early development of the nervous system and is required for proper patterning of the neuroectoderm during gastrulation. This involves the correct speciation of the neuroepithelial domain and adequate development of the non-neural ectoderm. The polypeptide is RE1-silencing transcription factor A (rest-a) (Xenopus laevis (African clawed frog)).